The primary structure comprises 261 residues: Glutamate racemase (261 aa).

Substrate is bound by residues aspartate 12–serine 13 and tyrosine 44–glycine 45. Residue cysteine 76 is the Proton donor/acceptor of the active site. Asparagine 77 to threonine 78 serves as a coordination point for substrate. Cysteine 180 serves as the catalytic Proton donor/acceptor. Substrate is bound at residue threonine 181–histidine 182.

The protein belongs to the aspartate/glutamate racemases family.

It carries out the reaction L-glutamate = D-glutamate. The protein operates within cell wall biogenesis; peptidoglycan biosynthesis. Provides the (R)-glutamate required for cell wall biosynthesis. This chain is Glutamate racemase, found in Borreliella burgdorferi (strain ATCC 35210 / DSM 4680 / CIP 102532 / B31) (Borrelia burgdorferi).